Here is a 377-residue protein sequence, read N- to C-terminus: Chaperone protein DnaJ (377 aa).

Residues 5–70 (DYYEILGVAK…QKRAAYDQFG (66 aa)) form the J domain. The segment at 130–208 (GTEVKIRVPS…CHGQGRVEEH (79 aa)) adopts a CR-type zinc-finger fold. Zn(2+)-binding residues include cysteine 143, cysteine 146, cysteine 160, cysteine 163, cysteine 182, cysteine 185, cysteine 196, and cysteine 199. 4 CXXCXGXG motif repeats span residues 143–150 (CGECHGSG), 160–167 (CGTCGGVG), 182–189 (CPRCHGTG), and 196–203 (CKACHGQG).

The protein belongs to the DnaJ family. As to quaternary structure, homodimer. It depends on Zn(2+) as a cofactor.

The protein resides in the cytoplasm. Participates actively in the response to hyperosmotic and heat shock by preventing the aggregation of stress-denatured proteins and by disaggregating proteins, also in an autonomous, DnaK-independent fashion. Unfolded proteins bind initially to DnaJ; upon interaction with the DnaJ-bound protein, DnaK hydrolyzes its bound ATP, resulting in the formation of a stable complex. GrpE releases ADP from DnaK; ATP binding to DnaK triggers the release of the substrate protein, thus completing the reaction cycle. Several rounds of ATP-dependent interactions between DnaJ, DnaK and GrpE are required for fully efficient folding. Also involved, together with DnaK and GrpE, in the DNA replication of plasmids through activation of initiation proteins. This Thioalkalivibrio sulfidiphilus (strain HL-EbGR7) protein is Chaperone protein DnaJ.